Consider the following 322-residue polypeptide: MIEFGNFYQLIAKSPLSHWLETLPAQIATWQRDQHGLFKQWSNAVEFLPELTPYRLDLLHSVTAESETPLSEGQLKRIDTLLRNLMPWRKGPFSLYGINIDTEWRSDWKWDRVLPHLSDLTGRTILDVGCGSGYHMWRMIGAGAHLAVGIDPTQLFLCQFEAVRKLLGNDQRAHLLPLGIEQLPALNTFDTVFSMGVLYHRRSPLEHLWQLKDQLVKDGELVLETLVVEGDENTVLVPGDRYAQMRNVYFIPSALALKNWLEKCGFVDVRIADVCVTSTEEQRRTGWMVTESLADFLDPNDHSKTVEGYPAPLRAVLIARKP.

Carboxy-S-adenosyl-L-methionine is bound by residues K90, W104, K109, G129, 151–153, 180–181, M195, Y199, and R314; these read DPT and IE.

Belongs to the class I-like SAM-binding methyltransferase superfamily. CmoB family. In terms of assembly, homotetramer.

The catalysed reaction is carboxy-S-adenosyl-L-methionine + 5-hydroxyuridine(34) in tRNA = 5-carboxymethoxyuridine(34) in tRNA + S-adenosyl-L-homocysteine + H(+). Its function is as follows. Catalyzes carboxymethyl transfer from carboxy-S-adenosyl-L-methionine (Cx-SAM) to 5-hydroxyuridine (ho5U) to form 5-carboxymethoxyuridine (cmo5U) at position 34 in tRNAs. This Citrobacter koseri (strain ATCC BAA-895 / CDC 4225-83 / SGSC4696) protein is tRNA U34 carboxymethyltransferase.